A 128-amino-acid polypeptide reads, in one-letter code: Fluoride-specific ion channel FluC (128 aa).

4 helical membrane-spanning segments follow: residues 4-24, 39-59, 71-91, and 99-119; these read LLLA…RYLI, GTLI…EFSM, FLTT…YETI, and MTLG…FVVI. Residues Gly-78 and Thr-81 each contribute to the Na(+) site.

The protein belongs to the fluoride channel Fluc/FEX (TC 1.A.43) family.

It is found in the cell membrane. The catalysed reaction is fluoride(in) = fluoride(out). Na(+) is not transported, but it plays an essential structural role and its presence is essential for fluoride channel function. Its function is as follows. Fluoride-specific ion channel. Important for reducing fluoride concentration in the cell, thus reducing its toxicity. The polypeptide is Fluoride-specific ion channel FluC (Clostridium perfringens (strain 13 / Type A)).